Here is a 250-residue protein sequence, read N- to C-terminus: 1-(5-phosphoribosyl)-5-[(5-phosphoribosylamino)methylideneamino] imidazole-4-carboxamide isomerase (250 aa).

Aspartate 12 (proton acceptor) is an active-site residue. The Proton donor role is filled by aspartate 134.

This sequence belongs to the HisA/HisF family.

Its subcellular location is the cytoplasm. It carries out the reaction 1-(5-phospho-beta-D-ribosyl)-5-[(5-phospho-beta-D-ribosylamino)methylideneamino]imidazole-4-carboxamide = 5-[(5-phospho-1-deoxy-D-ribulos-1-ylimino)methylamino]-1-(5-phospho-beta-D-ribosyl)imidazole-4-carboxamide. It functions in the pathway amino-acid biosynthesis; L-histidine biosynthesis; L-histidine from 5-phospho-alpha-D-ribose 1-diphosphate: step 4/9. In Actinobacillus pleuropneumoniae serotype 5b (strain L20), this protein is 1-(5-phosphoribosyl)-5-[(5-phosphoribosylamino)methylideneamino] imidazole-4-carboxamide isomerase.